The sequence spans 549 residues: Beta-mannosyltransferase 3 (549 aa).

Over 1-37 (MFESDLSFYSALLILCCPISIVFFKKFPIKGYTGANK) the chain is Cytoplasmic. The chain crosses the membrane as a helical span at residues 38-58 (VSLFLQCLIAILNLNILYSFI). The Extracellular portion of the chain corresponds to 59-549 (NSLTITLGHD…DTMGWDKLSR (491 aa)).

The protein belongs to the BMT family.

Its subcellular location is the membrane. Its function is as follows. Beta-mannosyltransferase involved in cell wall biosynthesis. Required for addition of the second beta-mannose residue to acid-stable fraction of cell wall phosphopeptidomannan, and in elongation of beta-mannose chains on the phosphopeptidomannan acid-labile fraction. The protein is Beta-mannosyltransferase 3 (BMT3) of Candida albicans (strain SC5314 / ATCC MYA-2876) (Yeast).